The following is a 372-amino-acid chain: Glutamate 5-kinase (372 aa).

Lys-14 contacts ATP. The substrate site is built by Ser-54, Asp-141, and Asn-153. ATP is bound at residue 173–174 (TD). Residues 280-358 (RGTLVLDEGA…DAIVGVLGYM (79 aa)) form the PUA domain.

Belongs to the glutamate 5-kinase family.

The protein resides in the cytoplasm. It catalyses the reaction L-glutamate + ATP = L-glutamyl 5-phosphate + ADP. Its pathway is amino-acid biosynthesis; L-proline biosynthesis; L-glutamate 5-semialdehyde from L-glutamate: step 1/2. Its function is as follows. Catalyzes the transfer of a phosphate group to glutamate to form L-glutamate 5-phosphate. This chain is Glutamate 5-kinase, found in Pseudomonas fluorescens (strain ATCC BAA-477 / NRRL B-23932 / Pf-5).